Here is a 287-residue protein sequence, read N- to C-terminus: Protease HtpX homolog (287 aa).

2 helical membrane-spanning segments follow: residues 4–24 (VGLF…VMSL) and 35–53 (LLLM…SLAL). Zn(2+) is bound at residue histidine 139. Residue glutamate 140 is part of the active site. Histidine 143 is a binding site for Zn(2+). Transmembrane regions (helical) follow at residues 147–167 (GDMV…IFLS) and 194–214 (AVSM…VMWF). Glutamate 219 is a Zn(2+) binding site.

This sequence belongs to the peptidase M48B family. It depends on Zn(2+) as a cofactor.

Its subcellular location is the cell inner membrane. The chain is Protease HtpX homolog from Desulfotalea psychrophila (strain LSv54 / DSM 12343).